A 140-amino-acid chain; its full sequence is Transmembrane protein 107 (140 aa).

2 helical membrane passes run 7-27 (LVPS…TLFW) and 53-73 (LVAA…GFLS). Residue asparagine 79 is glycosylated (N-linked (GlcNAc...) asparagine). A run of 2 helical transmembrane segments spans residues 83–103 (SLLS…FVFE) and 113–133 (IFTF…IAVF).

In terms of assembly, part of the tectonic-like complex (also named B9 complex). Interacts with TMEM237, TMEM231, MKS1 and TMEM216.

It is found in the membrane. Its subcellular location is the cell projection. The protein localises to the cilium. Its function is as follows. Plays a role in cilia formation and embryonic patterning. Requires for normal Sonic hedgehog (Shh) signaling in the neural tube and acts in combination with GLI2 and GLI3 to pattern ventral and intermediate neuronal cell types. During ciliogenesis regulates the ciliary transition zone localization of some MKS complex proteins. The protein is Transmembrane protein 107 of Mus musculus (Mouse).